Consider the following 258-residue polypeptide: D-beta-hydroxybutyrate dehydrogenase (258 aa).

6-30 (VITGSTSGIGLAIARTLAKAGANIV) contacts NAD(+). Serine 140 is a substrate binding site. Tyrosine 153 functions as the Proton acceptor in the catalytic mechanism.

This sequence belongs to the short-chain dehydrogenases/reductases (SDR) family.

It catalyses the reaction (R)-3-hydroxybutanoate + NAD(+) = acetoacetate + NADH + H(+). In Rhizobium meliloti (strain 1021) (Ensifer meliloti), this protein is D-beta-hydroxybutyrate dehydrogenase (bdhA).